An 859-amino-acid chain; its full sequence is Toll-like receptor 5 (859 aa).

An N-terminal signal peptide occupies residues 1 to 26 (MACQLDLLIGVIFMASPVLVISPCSS). The Extracellular segment spans residues 27-641 (DGRIAFFRGC…EEEAMRSLKF (615 aa)). N37, N46, and N84 each carry an N-linked (GlcNAc...) asparagine glycan. LRR repeat units lie at residues 45–69 (LNTT…SFPL), 72–94 (RLQL…AFRN), 96–118 (PNLR…AFQG), 121–144 (HLLE…YFRN), 147–167 (SLAR…HSSF), 172–193 (SLSD…ELEP), 198–212 (TLSF…LFSR), 215–230 (VGWE…VRLE), and 235–236 (SE). N246 is a glycosylation site (N-linked (GlcNAc...) asparagine). LRR repeat units lie at residues 261–285 (LKHH…TFAS), 290–302 (SVLQ…GFIF), 314–335 (DLKM…AFYG), 338–356 (SLQV…YNSN), 386–402 (TLQT…AIGF), and 413–432 (GNKL…LELS). An N-linked (GlcNAc...) asparagine glycan is attached at N343. N438 carries N-linked (GlcNAc...) asparagine glycosylation. LRR repeat units lie at residues 450 to 471 (QLQF…HTPS), 475 to 496 (SLEQ…GLCW), 504 to 525 (RLQI…IFND), 528 to 547 (ALRM…PGSL), and 550 to 568 (NLEI…DPAL). The 53-residue stretch at 580 to 632 (NEFVCNCELSTFISWLNQTNVTLFGSPADVYCMYPNSLLGGSLYNISTEDCDE) folds into the LRRCT domain. 2 cysteine pairs are disulfide-bonded: C584–C611 and C586–C630. Residues N596, N599, and N624 are each glycosylated (N-linked (GlcNAc...) asparagine). Residues 642–662 (SLFILCTVTLTLFLVITLVVI) traverse the membrane as a helical segment. The Cytoplasmic portion of the chain corresponds to 663–859 (KFRGICFLCY…IQLRTIATIS (197 aa)). The TIR domain maps to 692-837 (YRYDAYFCFS…WFLDKLSGCI (146 aa)). Residue Y799 is modified to Phosphotyrosine.

It belongs to the Toll-like receptor family. In terms of assembly, homodimer. Interacts with MYD88 (via TIR domain). Interacts with TICAM1 (via TIR domain). Interacts with UNC93B1; this interaction is essential for proper TLR5 localization to the plasma membrane. In terms of processing, phosphorylated at Tyr-799 upon flagellin binding; required for signaling. As to expression, highly expressed in liver. Detected in lung and at very low levels in most other tissues.

It is found in the membrane. Functionally, pattern recognition receptor (PRR) located on the cell surface that participates in the activation of innate immunity and inflammatory response. Recognizes small molecular motifs named pathogen-associated molecular pattern (PAMPs) expressed by pathogens and microbe-associated molecular patterns (MAMPs) usually expressed by resident microbiota. Upon ligand binding such as bacterial flagellins, recruits intracellular adapter proteins MYD88 and TRIF leading to NF-kappa-B activation, cytokine secretion and induction of the inflammatory response. Plays thereby an important role in the relationship between the intestinal epithelium and enteric microbes and contributes to the gut microbiota composition throughout life. This Mus musculus (Mouse) protein is Toll-like receptor 5 (Tlr5).